Reading from the N-terminus, the 954-residue chain is Regulatory protein FlaEY (954 aa).

In terms of biological role, functions in trans to modulate the level of transcription of the flagellin genes and several genes encoding chemotaxis functions. It is itself temporally controlled. The sequence is that of Regulatory protein FlaEY (flaEY) from Caulobacter vibrioides (strain ATCC 19089 / CIP 103742 / CB 15) (Caulobacter crescentus).